Reading from the N-terminus, the 530-residue chain is Trigger factor (530 aa).

The region spanning 162–243 (DDLVTIDLAG…VTKVCEQELP (82 aa)) is the PPIase FKBP-type domain. The disordered stretch occupies residues 432–530 (NALELDRIQP…KTAAKDDKSK (99 aa)). Composition is skewed to basic and acidic residues over residues 459–478 (SAEKADGKATEESKAEEKAP) and 501–512 (KVVDAKSDDKPA).

It belongs to the FKBP-type PPIase family. Tig subfamily.

The protein localises to the cytoplasm. It carries out the reaction [protein]-peptidylproline (omega=180) = [protein]-peptidylproline (omega=0). Functionally, involved in protein export. Acts as a chaperone by maintaining the newly synthesized protein in an open conformation. Functions as a peptidyl-prolyl cis-trans isomerase. The sequence is that of Trigger factor from Cutibacterium acnes (strain DSM 16379 / KPA171202) (Propionibacterium acnes).